The primary structure comprises 218 residues: Putative pre-16S rRNA nuclease (218 aa).

This sequence belongs to the YqgF nuclease family.

It localises to the cytoplasm. In terms of biological role, could be a nuclease involved in processing of the 5'-end of pre-16S rRNA. The polypeptide is Putative pre-16S rRNA nuclease (Thermotoga maritima (strain ATCC 43589 / DSM 3109 / JCM 10099 / NBRC 100826 / MSB8)).